The sequence spans 328 residues: Probable cell division protein WhiA (328 aa).

Residues 273-306 constitute a DNA-binding region (H-T-H motif); the sequence is SLEELGALADPPLTKDAVAGRIRRLLAMADKRAS.

Belongs to the WhiA family. Monomer in solution.

Involved in cell division and chromosome segregation. Involved in sporulation. May coordinate the cessation of aerial hyphae growth and subsequent chromosome segregation and/or septation. Required for expression of the ParB partioning protein during sporogenesis. Activates its own transcription and represses WhiB. Binds with low affinity to its own promoter and to the Parp2 sporulation-specific promoter. Also binds directly to the RNA polymerase sigma factor WhiG, leading to inhibition of WhiG-dependent transcription in a dose-dependent manner. The sequence is that of Probable cell division protein WhiA from Streptomyces coelicolor (strain ATCC BAA-471 / A3(2) / M145).